The primary structure comprises 55 residues: Large ribosomal subunit protein bL33B (55 aa).

Belongs to the bacterial ribosomal protein bL33 family.

This chain is Large ribosomal subunit protein bL33B, found in Salinispora tropica (strain ATCC BAA-916 / DSM 44818 / JCM 13857 / NBRC 105044 / CNB-440).